A 2314-amino-acid chain; its full sequence is Protein Ycf2 (2314 aa).

1653–1660 is an ATP binding site; sequence GSIGTGRS.

This sequence belongs to the Ycf2 family.

The protein localises to the plastid. Its subcellular location is the chloroplast stroma. In terms of biological role, probable ATPase of unknown function. Its presence in a non-photosynthetic plant (Epifagus virginiana) and experiments in tobacco indicate that it has an essential function which is probably not related to photosynthesis. The protein is Protein Ycf2 of Piper cenocladum (Ant piper).